Consider the following 79-residue polypeptide: Acyl carrier protein (79 aa).

Residues 2–77 (ENIEQRVKKI…QAIDYVNAHL (76 aa)) enclose the Carrier domain. Ser-37 is subject to O-(pantetheine 4'-phosphoryl)serine.

This sequence belongs to the acyl carrier protein (ACP) family. In terms of processing, 4'-phosphopantetheine is transferred from CoA to a specific serine of apo-ACP by AcpS. This modification is essential for activity because fatty acids are bound in thioester linkage to the sulfhydryl of the prosthetic group.

The protein resides in the cytoplasm. It functions in the pathway lipid metabolism; fatty acid biosynthesis. Carrier of the growing fatty acid chain in fatty acid biosynthesis. The polypeptide is Acyl carrier protein (Azoarcus sp. (strain BH72)).